A 123-amino-acid chain; its full sequence is Ribosome-binding factor A (123 aa).

This sequence belongs to the RbfA family. As to quaternary structure, monomer. Binds 30S ribosomal subunits, but not 50S ribosomal subunits or 70S ribosomes.

It localises to the cytoplasm. Functionally, one of several proteins that assist in the late maturation steps of the functional core of the 30S ribosomal subunit. Associates with free 30S ribosomal subunits (but not with 30S subunits that are part of 70S ribosomes or polysomes). Required for efficient processing of 16S rRNA. May interact with the 5'-terminal helix region of 16S rRNA. The sequence is that of Ribosome-binding factor A from Magnetococcus marinus (strain ATCC BAA-1437 / JCM 17883 / MC-1).